The following is a 217-amino-acid chain: Ribose-5-phosphate isomerase A (217 aa).

Residues 28–31, 81–84, and 94–97 each bind substrate; these read TGST, DGAD, and KGGG. Glu-103 serves as the catalytic Proton acceptor. Lys-121 lines the substrate pocket.

Belongs to the ribose 5-phosphate isomerase family. Homodimer.

It carries out the reaction aldehydo-D-ribose 5-phosphate = D-ribulose 5-phosphate. The protein operates within carbohydrate degradation; pentose phosphate pathway; D-ribose 5-phosphate from D-ribulose 5-phosphate (non-oxidative stage): step 1/1. Catalyzes the reversible conversion of ribose-5-phosphate to ribulose 5-phosphate. The chain is Ribose-5-phosphate isomerase A from Aeromonas salmonicida (strain A449).